We begin with the raw amino-acid sequence, 213 residues long: Peptidoglycan-N-acetylglucosamine deacetylase BC_3618 (213 aa).

Positions 22–203 constitute a NodB homology domain; sequence KIIAITFDDG…ELKKQGYRFV (182 aa). Asp-29 functions as the Proton acceptor in the catalytic mechanism. The Zn(2+) site is built by Asp-30, His-80, and His-84. The active-site Proton donor is the His-175.

It belongs to the polysaccharide deacetylase family. Requires Zn(2+) as cofactor.

It catalyses the reaction peptidoglycan-N-acetyl-D-glucosamine + H2O = peptidoglycan-D-glucosamine + acetate.. Inhibited by CuCl(2) and ZnCl(2). In terms of biological role, catalyzes the deacetylation of N-acetylglucosamine (GlcNAc) residues in peptidoglycan. Also acts on soluble chitin substrates and N-acetylchitooligomers. Acts on cell wall peptidoglycan from the Gram-positive bacteria B.cereus and B.subtilis and the Gram-negative bacterium H.pylori. Not active on acetylated xylan. This chain is Peptidoglycan-N-acetylglucosamine deacetylase BC_3618, found in Bacillus cereus (strain ATCC 14579 / DSM 31 / CCUG 7414 / JCM 2152 / NBRC 15305 / NCIMB 9373 / NCTC 2599 / NRRL B-3711).